A 305-amino-acid chain; its full sequence is Ubiquinone biosynthesis protein COQ4 homolog, mitochondrial (305 aa).

His150, Asp151, His154, and Glu166 together coordinate Zn(2+).

It belongs to the COQ4 family. As to quaternary structure, component of a multi-subunit COQ enzyme complex. Zn(2+) serves as cofactor.

It is found in the mitochondrion inner membrane. The enzyme catalyses a 4-hydroxy-3-methoxy-5-(all-trans-polyprenyl)benzoate + H(+) = a 2-methoxy-6-(all-trans-polyprenyl)phenol + CO2. It participates in cofactor biosynthesis; ubiquinone biosynthesis. Lyase that catalyzes the C1-decarboxylation of 4-hydroxy-3-methoxy-5-(all-trans-polyprenyl)benzoic acid into 2-methoxy-6-(all-trans-polyprenyl)phenol during ubiquinone biosynthesis. The polypeptide is Ubiquinone biosynthesis protein COQ4 homolog, mitochondrial (Cryptosporidium parvum (strain Iowa II)).